Consider the following 64-residue polypeptide: DNA-binding protein 7 (64 aa).

N6-methyllysine occurs at positions 5 and 7.

This sequence belongs to the 7 kDa DNA-binding/endoribonuclease P2 family. As to quaternary structure, monomer.

The protein resides in the cytoplasm. Can constrain negative DNA supercoils. May be involved in maintaining the integrity of the genome at high temperature. This Sulfurisphaera tokodaii (strain DSM 16993 / JCM 10545 / NBRC 100140 / 7) (Sulfolobus tokodaii) protein is DNA-binding protein 7.